Here is a 493-residue protein sequence, read N- to C-terminus: MTALNELTLAEARDGLKAKDFSAREIAQAHLDAIDRAKALNAYIVATPDRALKMAEVSDQKIAKGEARPLEGLPLGIKDLFATQGVDTTAGSKILEGFEPHYESNVSSQLWRDGAVMLGKLNLDEFAMGSSNETSAYGKTISPWRRQGSYAPLVPGGSSGGSAAAVAAHLCLGATATDTGGSIRQPAAFTGTVGIKPTYGRCSRWGIIAYASSLDQAGPIARTVQDCAILLGSMAGHDPRDTTSVDMPVPDFEAAISRGVKGLTIGIPKEYRVEGMPAEIQRLWDQGADWLREAGATIKEISLPHTQYALPAYYIVAPAEASSNLARYDGVRYGLRVPGKDIAGMYENTRAAGFGREVKRRIMIGTYVLSAGYYDAYYVRAQKIRTLIKRDFEAAYASGVDAILTPATPSAAFGIGEMASADPVEMYLNDVFTVTVNMAGLPGISVPAGLDAQGLPLGLQLIGRPFDEETLFAAAQTIENAAGRISLPKAWWA.

Catalysis depends on charge relay system residues lysine 78 and serine 158. Catalysis depends on serine 182, which acts as the Acyl-ester intermediate.

Belongs to the amidase family. GatA subfamily. In terms of assembly, heterotrimer of A, B and C subunits.

The enzyme catalyses L-glutamyl-tRNA(Gln) + L-glutamine + ATP + H2O = L-glutaminyl-tRNA(Gln) + L-glutamate + ADP + phosphate + H(+). Its function is as follows. Allows the formation of correctly charged Gln-tRNA(Gln) through the transamidation of misacylated Glu-tRNA(Gln) in organisms which lack glutaminyl-tRNA synthetase. The reaction takes place in the presence of glutamine and ATP through an activated gamma-phospho-Glu-tRNA(Gln). The polypeptide is Glutamyl-tRNA(Gln) amidotransferase subunit A (Methylorubrum extorquens (strain PA1) (Methylobacterium extorquens)).